Reading from the N-terminus, the 549-residue chain is Fumarate hydratase 1, mitochondrial (549 aa).

Position 114 (cysteine 114) interacts with [4Fe-4S] cluster. Residues 115 to 116, arginine 154, glycine 197, and 200 to 206 contribute to the (S)-malate site; these read QD and NKSFLLQ. Positions 233 and 328 each coordinate [4Fe-4S] cluster. Residues arginine 404, 450-454, and lysine 474 contribute to the (S)-malate site; that span reads TTAGR.

Belongs to the class-I fumarase family. In terms of assembly, homodimer. [4Fe-4S] cluster is required as a cofactor.

The protein resides in the mitochondrion. It catalyses the reaction (S)-malate = fumarate + H2O. It participates in carbohydrate metabolism; tricarboxylic acid cycle; (S)-malate from fumarate: step 1/1. Specifically and competitively inhibited by 2-thiomalate, which coordinates with the catalytic [4Fe-4S] cluster. Functionally, catalyzes the reversible hydration of fumarate to (S)-malate. Catalyzes the hydration of fumarate to L-malate in the tricarboxylic acid (TCA) cycle to facilitate a transition step in the production of energy in the form of NADH. This chain is Fumarate hydratase 1, mitochondrial, found in Leishmania major.